The chain runs to 274 residues: Diaminopimelate epimerase (274 aa).

Asn11, Gln44, and Asn64 together coordinate substrate. The active-site Proton donor is Cys73. Substrate contacts are provided by residues 74–75 (GN), Asn157, Asn190, and 208–209 (ER). The active-site Proton acceptor is Cys217. 218–219 (GS) serves as a coordination point for substrate.

This sequence belongs to the diaminopimelate epimerase family. In terms of assembly, homodimer.

The protein localises to the cytoplasm. It carries out the reaction (2S,6S)-2,6-diaminopimelate = meso-2,6-diaminopimelate. Its pathway is amino-acid biosynthesis; L-lysine biosynthesis via DAP pathway; DL-2,6-diaminopimelate from LL-2,6-diaminopimelate: step 1/1. In terms of biological role, catalyzes the stereoinversion of LL-2,6-diaminopimelate (L,L-DAP) to meso-diaminopimelate (meso-DAP), a precursor of L-lysine and an essential component of the bacterial peptidoglycan. The protein is Diaminopimelate epimerase of Enterobacter sp. (strain 638).